Consider the following 201-residue polypeptide: Recombination protein RecR (201 aa).

The segment at 57-72 (CADCRTFTEQDICTIC) adopts a C4-type zinc-finger fold. One can recognise a Toprim domain in the interval 81 to 176 (GQICVVESPA…VASRIAHGVP (96 aa)).

This sequence belongs to the RecR family.

In terms of biological role, may play a role in DNA repair. It seems to be involved in an RecBC-independent recombinational process of DNA repair. It may act with RecF and RecO. This is Recombination protein RecR from Serratia proteamaculans (strain 568).